A 429-amino-acid chain; its full sequence is Histidinol dehydrogenase (429 aa).

NAD(+)-binding residues include Y130, Q191, and N214. Positions 237, 259, and 262 each coordinate substrate. 2 residues coordinate Zn(2+): Q259 and H262. Catalysis depends on proton acceptor residues E327 and H328. Residues H328, D361, E415, and H420 each contribute to the substrate site. D361 provides a ligand contact to Zn(2+). A Zn(2+)-binding site is contributed by H420.

Belongs to the histidinol dehydrogenase family. Zn(2+) is required as a cofactor.

The catalysed reaction is L-histidinol + 2 NAD(+) + H2O = L-histidine + 2 NADH + 3 H(+). It functions in the pathway amino-acid biosynthesis; L-histidine biosynthesis; L-histidine from 5-phospho-alpha-D-ribose 1-diphosphate: step 9/9. In terms of biological role, catalyzes the sequential NAD-dependent oxidations of L-histidinol to L-histidinaldehyde and then to L-histidine. This chain is Histidinol dehydrogenase, found in Nitrobacter winogradskyi (strain ATCC 25391 / DSM 10237 / CIP 104748 / NCIMB 11846 / Nb-255).